A 373-amino-acid polypeptide reads, in one-letter code: Glutamine synthetase (373 aa).

Threonine 2 bears the N-acetylthreonine mark. The interval 2–25 (TTSASSHLNKGIKQVYMSLPQGEK) is required for glutamine-induced ubiquitination by CRL4(CRBN) and proteasomal degradation. N6-acetyllysine; by EP300 is present on residues lysine 11 and lysine 14. The GS beta-grasp domain occupies 24–106 (EKVQAMYIWI…VLCEVFKYNR (83 aa)). At tyrosine 104 the chain carries Phosphotyrosine. A GS catalytic domain is found at 113–373 (LRHTCKRIMD…TGDEPFQYKN (261 aa)). Residue glutamate 134 participates in ATP binding. Residues glutamate 134, glutamate 136, glutamate 196, and glutamate 203 each contribute to the Mn(2+) site. ATP is bound at residue 203–208 (EFQIGP). 246–247 (NW) is an L-glutamate binding site. Histidine 253 is a binding site for Mn(2+). ATP is bound by residues 255-257 (NFS), arginine 319, and arginine 324. Arginine 319 serves as a coordination point for L-glutamate. 336–338 (YFE) lines the ADP pocket. Glutamate 338 contributes to the Mn(2+) binding site. Arginine 340 lines the L-glutamate pocket. A Phosphoserine modification is found at serine 343.

It belongs to the glutamine synthetase family. As to quaternary structure, decamer; composed of two pentamers. Interacts with PALMD. Interacts with RHOJ. Interacts with BEST2; this interaction tethers a fraction of GLUL to the membrane, causing a decrease of cytosolic glutamine synthase (GS) activity and inhibits the chloride channel activity of BEST2 by affecting the gating at the aperture in the absence of intracellular glutamate. Mg(2+) serves as cofactor. Mn(2+) is required as a cofactor. In terms of processing, acetylated by EP300/p300; acetylation is stimulated by increased glutamine levels and promotes ubiquitin-mediated proteasomal degradation. Post-translationally, palmitoylated; undergoes autopalmitoylation. Ubiquitinated by ZNRF1. Ubiquitinated by the DCX (DDB1-CUL4-X-box) E3 ubiquitin-protein ligase complex called CRL4(CRBN), leading to proteasomal degradation. As to expression, expressed in endothelial cells.

Its subcellular location is the cytoplasm. It is found in the cytosol. It localises to the microsome. The protein resides in the mitochondrion. The protein localises to the cell membrane. It carries out the reaction L-glutamate + NH4(+) + ATP = L-glutamine + ADP + phosphate + H(+). It catalyses the reaction L-cysteinyl-[protein] + hexadecanoyl-CoA = S-hexadecanoyl-L-cysteinyl-[protein] + CoA. Glutamine synthetase activity is inhibited by methionine sulfoximine (MSO). Its function is as follows. Glutamine synthetase that catalyzes the ATP-dependent conversion of glutamate and ammonia to glutamine. Its role depends on tissue localization: in the brain, it regulates the levels of toxic ammonia and converts neurotoxic glutamate to harmless glutamine, whereas in the liver, it is one of the enzymes responsible for the removal of ammonia. Plays a key role in ammonium detoxification during erythropoiesis: the glutamine synthetase activity is required to remove ammonium generated by porphobilinogen deaminase (HMBS) during heme biosynthesis to prevent ammonium accumulation and oxidative stress. Essential for proliferation of fetal skin fibroblasts. Independently of its glutamine synthetase activity, required for endothelial cell migration during vascular development: acts by regulating membrane localization and activation of the GTPase RHOJ, possibly by promoting RHOJ palmitoylation. May act as a palmitoyltransferase for RHOJ: able to autopalmitoylate and then transfer the palmitoyl group to RHOJ. Plays a role in ribosomal 40S subunit biogenesis. Through the interaction with BEST2, inhibits BEST2 channel activity by affecting the gating at the aperture in the absence of intracellular L-glutamate, but sensitizes BEST2 to intracellular L-glutamate, which promotes the opening of BEST2 and thus relieves its inhibitory effect on BEST2. The sequence is that of Glutamine synthetase from Homo sapiens (Human).